The primary structure comprises 202 residues: Cytochrome c oxidase assembly protein CtaG (202 aa).

The Cytoplasmic portion of the chain corresponds to 1-14 (MSENAGTPKKQGRN). A helical; Signal-anchor for type II membrane protein membrane pass occupies residues 15 to 37 (NGAVVMMCLSFVFGMGAMSYAAV). At 38 to 202 (PLYRIFCQVT…GGAEKIEKKL (165 aa)) the chain is on the periplasmic side.

Belongs to the COX11/CtaG family.

The protein localises to the cell inner membrane. Its function is as follows. Exerts its effect at some terminal stage of cytochrome c oxidase synthesis, probably by being involved in the insertion of the copper B into subunit I. This chain is Cytochrome c oxidase assembly protein CtaG, found in Rhizobium johnstonii (strain DSM 114642 / LMG 32736 / 3841) (Rhizobium leguminosarum bv. viciae).